Consider the following 640-residue polypeptide: DNA gyrase subunit B (640 aa).

The region spanning 423–537 (AELYIVEGDS…NGNIYIAQPP (115 aa)) is the Toprim domain. Glu-429, Asp-502, and Asp-504 together coordinate Mg(2+).

Belongs to the type II topoisomerase GyrB family. Heterotetramer, composed of two GyrA and two GyrB chains. In the heterotetramer, GyrA contains the active site tyrosine that forms a transient covalent intermediate with DNA, while GyrB binds cofactors and catalyzes ATP hydrolysis. Mg(2+) is required as a cofactor. Mn(2+) serves as cofactor. Requires Ca(2+) as cofactor.

It localises to the cytoplasm. It catalyses the reaction ATP-dependent breakage, passage and rejoining of double-stranded DNA.. Functionally, a type II topoisomerase that negatively supercoils closed circular double-stranded (ds) DNA in an ATP-dependent manner to modulate DNA topology and maintain chromosomes in an underwound state. Negative supercoiling favors strand separation, and DNA replication, transcription, recombination and repair, all of which involve strand separation. Also able to catalyze the interconversion of other topological isomers of dsDNA rings, including catenanes and knotted rings. Type II topoisomerases break and join 2 DNA strands simultaneously in an ATP-dependent manner. This Spiroplasma citri protein is DNA gyrase subunit B.